Consider the following 190-residue polypeptide: uncharacterized protein (190 aa).

The N-terminal stretch at 1–28 (MEFSLQYITIFIFVILFLIGLFSSKSRS) is a signal peptide.

This is an uncharacterized protein from Haemophilus influenzae (strain ATCC 51907 / DSM 11121 / KW20 / Rd).